The sequence spans 415 residues: Transfer protein TraSA (415 aa).

One can recognise a FtsK domain in the interval 127 to 326 (DGAVHYRDYR…HRVNDETSAN (200 aa)). 145–152 (GATESGKS) serves as a coordination point for ATP.

The protein is Transfer protein TraSA (traSA) of Streptomyces ambofaciens.